The following is a 106-amino-acid chain: Met repressor (106 aa).

The protein belongs to the MetJ family. Homodimer.

It is found in the cytoplasm. In terms of biological role, this regulatory protein, when combined with SAM (S-adenosylmethionine) represses the expression of the methionine regulon and of enzymes involved in SAM synthesis. This chain is Met repressor, found in Vibrio atlanticus (strain LGP32) (Vibrio splendidus (strain Mel32)).